An 84-amino-acid chain; its full sequence is Putative glutaredoxin MT3292 (84 aa).

Positions 1-84 constitute a Glutaredoxin domain; that stretch reads MITAALTIYT…VKAKLVKIAG (84 aa).

This is Putative glutaredoxin MT3292 from Mycobacterium tuberculosis (strain CDC 1551 / Oshkosh).